Consider the following 877-residue polypeptide: Protein SEY1 homolog (877 aa).

The Cytoplasmic portion of the chain corresponds to 1 to 735; that stretch reads MVAFAGGART…LRSIEGEKQN (735 aa). The GB1/RHD3-type G domain maps to 49–307; the sequence is GITYHVVGVL…VPLDGIPSYL (259 aa). Residue 59–66 participates in GTP binding; it reads GGQSSGKS. The stretch at 388-410 forms a coiled coil; sequence RIDIVRKTEAELEEELLKVELKL. A helical transmembrane segment spans residues 736 to 756; it reads LPAWVLPVLLLLGWNEIWYVL. Residues 757 to 759 are Lumenal-facing; that stretch reads SSP. Residues 760 to 780 traverse the membrane as a helical segment; it reads VLLVVVVIIAAVFLRGFLLTQ. The Cytoplasmic portion of the chain corresponds to 781–877; that stretch reads WAIFEETGPT…KEEEVPTQKE (97 aa). Residues 850–877 are disordered; that stretch reads PTVLPPSTTSATLTRRLKKEEEVPTQKE. The segment covering 867 to 877 has biased composition (basic and acidic residues); it reads KKEEEVPTQKE.

Belongs to the TRAFAC class dynamin-like GTPase superfamily. GB1/RHD3 GTPase family. RHD3 subfamily.

The protein localises to the endoplasmic reticulum membrane. Probable GTP-binding protein that may be involved in cell development. The sequence is that of Protein SEY1 homolog from Trypanosoma cruzi (strain CL Brener).